The primary structure comprises 162 residues: UPF0114 protein Sfri_3655 (162 aa).

3 helical membrane passes run 15–35, 53–73, and 136–156; these read IMAP…IKFF, LVLI…LIMV, and IMWY…MGYL.

Belongs to the UPF0114 family.

Its subcellular location is the cell membrane. The polypeptide is UPF0114 protein Sfri_3655 (Shewanella frigidimarina (strain NCIMB 400)).